Reading from the N-terminus, the 142-residue chain is MKTFTATPETVTRDWFVVDAEGKTLGRIATEIAIRLRGKHKPEYTPHVDTGDYIIVINAEKVTVTGNKAAGKIYYSHSGFPGGIKQISFEKLQAQKPEMIIEKAVKGMLPKGPLGRAMFRKLKVYAGVEHNHAAQQPQVLDI.

The protein belongs to the universal ribosomal protein uL13 family. Part of the 50S ribosomal subunit.

Functionally, this protein is one of the early assembly proteins of the 50S ribosomal subunit, although it is not seen to bind rRNA by itself. It is important during the early stages of 50S assembly. In Shewanella denitrificans (strain OS217 / ATCC BAA-1090 / DSM 15013), this protein is Large ribosomal subunit protein uL13.